Here is a 250-residue protein sequence, read N- to C-terminus: Small ribosomal subunit protein uS3 (250 aa).

The 69-residue stretch at 39 to 107 folds into the KH type-2 domain; the sequence is VREFLTKKLK…PAQVSINEID (69 aa). The interval 215–250 is disordered; that stretch reads MNPAPAEERPAKRGRGRGEGQERRGRRGDRAADKGE. Residues 220–250 show a composition bias toward basic and acidic residues; the sequence is AEERPAKRGRGRGEGQERRGRRGDRAADKGE.

This sequence belongs to the universal ribosomal protein uS3 family. In terms of assembly, part of the 30S ribosomal subunit. Forms a tight complex with proteins S10 and S14.

Binds the lower part of the 30S subunit head. Binds mRNA in the 70S ribosome, positioning it for translation. This Acinetobacter baumannii (strain SDF) protein is Small ribosomal subunit protein uS3.